Here is a 235-residue protein sequence, read N- to C-terminus: Large ribosomal subunit protein uL1 (235 aa).

The protein belongs to the universal ribosomal protein uL1 family. As to quaternary structure, part of the 50S ribosomal subunit.

Its function is as follows. Binds directly to 23S rRNA. The L1 stalk is quite mobile in the ribosome, and is involved in E site tRNA release. In terms of biological role, protein L1 is also a translational repressor protein, it controls the translation of the L11 operon by binding to its mRNA. The protein is Large ribosomal subunit protein uL1 of Blochmanniella floridana.